Reading from the N-terminus, the 76-residue chain is Protein OPG128 (76 aa).

Cysteine 17 and cysteine 21 form a disulfide bridge.

It belongs to the orthopoxvirus OPG128 family. Interacts with sulfhydryl oxidase OPG072; this interaction involves formation of a transient disulfide-bonded intermediate, allowing disulfide bond transfer. Interacts with OPG088; this interaction involves formation of a transient disulfide-bonded intermediate, allowing disulfide bond transfer.

Late protein which probably participates in disulfide bond formation by functioning as a thiol-disulfide transfer protein between membrane-associated OPG072 and OPG08. The complete pathway for formation of disulfide bonds in intracellular virion membrane proteins sequentially involves oxidation of OPG072, OPG128 and OPG08. The protein is Protein OPG128 (OPG128) of Homo sapiens (Human).